The following is a 144-amino-acid chain: Large ribosomal subunit protein uL16 (144 aa).

Residues 1 to 19 are compositionally biased toward basic residues; that stretch reads MLLPKRVKYRRQHRPKTTG. The interval 1-23 is disordered; that stretch reads MLLPKRVKYRRQHRPKTTGRSKG.

This sequence belongs to the universal ribosomal protein uL16 family. Part of the 50S ribosomal subunit.

Binds 23S rRNA and is also seen to make contacts with the A and possibly P site tRNAs. The polypeptide is Large ribosomal subunit protein uL16 (Staphylococcus aureus (strain Mu50 / ATCC 700699)).